Here is a 367-residue protein sequence, read N- to C-terminus: Membrane-bound lytic murein transglycosylase C (367 aa).

A signal peptide spans 1-19; it reads MRKYAKYLPFCLVVPFLAA. Cys-20 is lipidated: N-palmitoyl cysteine. Cys-20 carries the S-diacylglycerol cysteine lipid modification.

Belongs to the transglycosylase Slt family.

The protein localises to the cell outer membrane. The catalysed reaction is Exolytic cleavage of the (1-&gt;4)-beta-glycosidic linkage between N-acetylmuramic acid (MurNAc) and N-acetylglucosamine (GlcNAc) residues in peptidoglycan, from either the reducing or the non-reducing ends of the peptidoglycan chains, with concomitant formation of a 1,6-anhydrobond in the MurNAc residue.. Murein-degrading enzyme. May play a role in recycling of muropeptides during cell elongation and/or cell division. The chain is Membrane-bound lytic murein transglycosylase C from Haemophilus ducreyi (strain 35000HP / ATCC 700724).